Here is a 234-residue protein sequence, read N- to C-terminus: Thiamine-phosphate synthase (234 aa).

4-amino-2-methyl-5-(diphosphooxymethyl)pyrimidine is bound by residues 52-56 (QYRSK) and Asn-84. Positions 85 and 104 each coordinate Mg(2+). Ser-123 serves as a coordination point for 4-amino-2-methyl-5-(diphosphooxymethyl)pyrimidine. 150–152 (SVT) contacts 2-[(2R,5Z)-2-carboxy-4-methylthiazol-5(2H)-ylidene]ethyl phosphate. Lys-153 provides a ligand contact to 4-amino-2-methyl-5-(diphosphooxymethyl)pyrimidine. Position 180 (Gly-180) interacts with 2-[(2R,5Z)-2-carboxy-4-methylthiazol-5(2H)-ylidene]ethyl phosphate.

Belongs to the thiamine-phosphate synthase family. Requires Mg(2+) as cofactor.

It carries out the reaction 2-[(2R,5Z)-2-carboxy-4-methylthiazol-5(2H)-ylidene]ethyl phosphate + 4-amino-2-methyl-5-(diphosphooxymethyl)pyrimidine + 2 H(+) = thiamine phosphate + CO2 + diphosphate. The enzyme catalyses 2-(2-carboxy-4-methylthiazol-5-yl)ethyl phosphate + 4-amino-2-methyl-5-(diphosphooxymethyl)pyrimidine + 2 H(+) = thiamine phosphate + CO2 + diphosphate. It catalyses the reaction 4-methyl-5-(2-phosphooxyethyl)-thiazole + 4-amino-2-methyl-5-(diphosphooxymethyl)pyrimidine + H(+) = thiamine phosphate + diphosphate. Its pathway is cofactor biosynthesis; thiamine diphosphate biosynthesis; thiamine phosphate from 4-amino-2-methyl-5-diphosphomethylpyrimidine and 4-methyl-5-(2-phosphoethyl)-thiazole: step 1/1. Its function is as follows. Condenses 4-methyl-5-(beta-hydroxyethyl)thiazole monophosphate (THZ-P) and 2-methyl-4-amino-5-hydroxymethyl pyrimidine pyrophosphate (HMP-PP) to form thiamine monophosphate (TMP). This is Thiamine-phosphate synthase from Nitrosospira multiformis (strain ATCC 25196 / NCIMB 11849 / C 71).